The chain runs to 270 residues: MDTIVTAILLGIVEGLTEFLPVSSTGHLILATELFGYDAHQWAMFNVVIQLGAILAVVVQYWRTFWAVGMGLLRLEPISLRFLRNLLAAFIPSAILGLALKKYIDVLLGSPSVVCWALIAGGIAILVIEKHAKQGEPSGIGQLPLRQAIGVGLAQCLAMVPGVSRSGATIMGALAMGIERRTAAEFSFFLAIPTMLGATTLELLDNRDALLGGTMGVGWSEIGVGFAVSFVVALAVIRLFVAYVSRAGFKPFAWYRIAAGAVALGWLAMR.

7 helical membrane passes run 3-23 (TIVTAILLGIVEGLTEFLPVS), 42-62 (WAMFNVVIQLGAILAVVVQYW), 86-106 (LLAAFIPSAILGLALKKYIDV), 108-128 (LGSPSVVCWALIAGGIAILVI), 184-204 (AEFSFFLAIPTMLGATTLELL), 217-237 (VGWSEIGVGFAVSFVVALAVI), and 249-269 (FKPFAWYRIAAGAVALGWLAM).

Belongs to the UppP family.

The protein resides in the cell inner membrane. The enzyme catalyses di-trans,octa-cis-undecaprenyl diphosphate + H2O = di-trans,octa-cis-undecaprenyl phosphate + phosphate + H(+). Functionally, catalyzes the dephosphorylation of undecaprenyl diphosphate (UPP). Confers resistance to bacitracin. The sequence is that of Undecaprenyl-diphosphatase from Novosphingobium aromaticivorans (strain ATCC 700278 / DSM 12444 / CCUG 56034 / CIP 105152 / NBRC 16084 / F199).